The chain runs to 182 residues: Fimbrial subunit type 1 (182 aa).

The signal sequence occupies residues 1 to 23 (MKIKTLAIVVLSALSLSSAAALA). Cys-44 and Cys-84 form a disulfide bridge.

Belongs to the fimbrial protein family.

Its subcellular location is the fimbrium. This chain is Fimbrial subunit type 1, found in Klebsiella pneumoniae.